Here is a 387-residue protein sequence, read N- to C-terminus: SLC2A4 regulator (387 aa).

Disordered regions lie at residues 1–97 (MERP…RATP) and 139–179 (EALV…PPEA). Low complexity predominate over residues 27 to 36 (GPGPRAAPVT). Residues 200-225 (FQCLWKSCGKVLSTASAMQRHIRLVH) form a C2H2-type zinc finger. The Nuclear export signal motif lies at 253 to 263 (LTDGLSSLTPV). Phosphoserine occurs at positions 264 and 268. The segment at 283-305 (EPPALPSPLRPPAPPLPPPPVLS) is disordered. Pro residues predominate over residues 285 to 303 (PALPSPLRPPAPPLPPPPV). Residues 351 to 354 (RKPR) carry the Nuclear localization signal motif.

In terms of assembly, interacts with MEF2A. In terms of tissue distribution, according to PubMed:14630949, expressed in heart, skeletal muscle, liver, kidney and pancreas; undetectable in lung, placenta or brain. According to PubMed:14625278, ubiquitously expressed, with lowest expression in brain and ileum.

It is found in the cytoplasm. It localises to the nucleus. In terms of biological role, transcription factor involved in SLC2A4 and HD gene transactivation. Binds to the consensus sequence 5'-GCCGGCG-3'. This chain is SLC2A4 regulator (SLC2A4RG), found in Homo sapiens (Human).